A 434-amino-acid chain; its full sequence is Septin-6 (434 aa).

Ala-2 is modified (N-acetylalanine). Phosphoserine is present on Ser-27. The region spanning 39-305 is the Septin-type G domain; that stretch reads QGFCFNILCV…ELYRRCKLEE (267 aa). The segment at 49-56 is G1 motif; it reads GETGLGKS. Residues 49-56, Gly-104, 185-193, Gly-239, and Arg-254 contribute to the GTP site; these read GETGLGKS and KADAISKSE. The segment at 101 to 104 is G3 motif; the sequence is STVG. Residues 184–187 form a G4 motif region; sequence AKAD. A coiled-coil region spans residues 321–409; it reads QETYEAKRNE…KTAAELLQSQ (89 aa). At Lys-367 the chain carries N6-acetyllysine. Residues 405-434 form a disordered region; the sequence is LLQSQGSQAGGSQTLKRDKEKKNNPWLCTE. A compositionally biased stretch (low complexity) spans 407–417; sequence QSQGSQAGGSQ. Phosphoserine is present on Ser-416. Thr-418 carries the phosphothreonine modification.

This sequence belongs to the TRAFAC class TrmE-Era-EngA-EngB-Septin-like GTPase superfamily. Septin GTPase family. As to quaternary structure, septins polymerize into heterooligomeric protein complexes that form filaments, and associate with cellular membranes, actin filaments and microtubules. GTPase activity is required for filament formation. Filaments are assembled from asymmetrical heterotrimers, composed of SEPTIN2, SEPTIN6 and SEPTIN7 that associate head-to-head to form a hexameric unit. Within the trimer, directly interacts with SEPTIN2 and SEPTIN7. Also interacts with SEPTIN9 and SEPTIN12. Interaction with SEPTIN12 alters filament structure. Component of a septin core octameric complex consisting of SEPTIN12, SEPTIN7, SEPTIN6 and SEPTIN2 or SEPTIN4 in the order 12-7-6-2-2-6-7-12 or 12-7-6-4-4-6-7-12 and located in the sperm annulus. Interacts with SOCS7. Interacts with HNRNPA1. (Microbial infection) Interacts with HCV NS5B. In terms of tissue distribution, widely expressed.

It is found in the cytoplasm. The protein localises to the cytoskeleton. The protein resides in the spindle. Its subcellular location is the chromosome. It localises to the centromere. It is found in the kinetochore. The protein localises to the cleavage furrow. The protein resides in the midbody. Its subcellular location is the cell projection. It localises to the cilium. It is found in the flagellum. Filament-forming cytoskeletal GTPase. Required for normal organization of the actin cytoskeleton. Involved in cytokinesis. May play a role in HCV RNA replication. Forms a filamentous structure with SEPTIN12, SEPTIN6, SEPTIN2 and probably SEPTIN4 at the sperm annulus which is required for the structural integrity and motility of the sperm tail during postmeiotic differentiation. The chain is Septin-6 from Homo sapiens (Human).